Consider the following 87-residue polypeptide: Small ribosomal subunit protein bS20 (87 aa).

This sequence belongs to the bacterial ribosomal protein bS20 family.

Binds directly to 16S ribosomal RNA. In Corynebacterium jeikeium (strain K411), this protein is Small ribosomal subunit protein bS20.